Consider the following 477-residue polypeptide: Ectonucleotide pyrophosphatase/phosphodiesterase family member 5 (477 aa).

A signal peptide spans 1 to 24; it reads MTSKFLLVSFILAALSLSTTFSLQ. D36 and T72 together coordinate Zn(2+). The active-site Nucleophile is the T72. 2 N-linked (GlcNAc...) asparagine glycosylation sites follow: N101 and N158. 4 residues coordinate Zn(2+): D191, H195, D238, and H239. Residues N292 and N329 are each glycosylated (N-linked (GlcNAc...) asparagine). H339 contributes to the Zn(2+) binding site. N-linked (GlcNAc...) asparagine glycosylation is found at N362, N369, N382, and N389. A helical transmembrane segment spans residues 432 to 452; it reads PYFIGVSLGSIIVIVFFVIFI.

It belongs to the nucleotide pyrophosphatase/phosphodiesterase family. The cofactor is Zn(2+). Post-translationally, N-glycosylated.

The protein localises to the secreted. It localises to the membrane. Can hydrolyze NAD but cannot hydrolyze nucleotide di- and triphosphates. Lacks lysopholipase D activity. May play a role in neuronal cell communication. This chain is Ectonucleotide pyrophosphatase/phosphodiesterase family member 5, found in Homo sapiens (Human).